The following is a 247-amino-acid chain: 5-hydroxytryptamine receptor 2A (247 aa).

K1 is a topological domain (extracellular). A helical transmembrane segment spans residues 2 to 26; it reads LCAIWIYLDVLFSTASIMHLCAISL. The cysteines at positions 3 and 82 are disulfide-linked. D10 serves as a coordination point for serotonin. Residues 27 to 29 carry the DRY motif; important for ligand-induced conformation changes motif; it reads DRY. The Cytoplasmic portion of the chain corresponds to 27–46; that stretch reads DRYVAIQNPIHHSRFNSRTK. Residues 47–70 form a helical membrane-spanning segment; sequence AFLKIIAVWTISVGISMPVPVFGL. The Extracellular segment spans residues 71 to 87; it reads QDDSKVFKEGSCLLADD. The helical transmembrane segment at 88–113 threads the bilayer; the sequence is NFVLIGSFVAFFIPLTIMVITYFLTI. Topologically, residues 114-177 are cytoplasmic; the sequence is KSLQKEATLC…QSISNEQKAC (64 aa). S135 carries the post-translational modification Phosphoserine. The chain crosses the membrane as a helical span at residues 178-203; the sequence is KVLGIVFFLFVVMWCPFFVTNIMAVI. Position 198 (N198) interacts with serotonin. C204 and C208 form a disulfide bridge. At 204-211 the chain is on the extracellular side; that stretch reads CKESCNED. A helical membrane pass occupies residues 212–237; it reads VIGALLNVFVWIGYLSSAVNPLVYTL. The NPxxY motif; important for ligand-induced conformation changes and signaling signature appears at 231–235; sequence NPLVY. Residues 238 to 247 are Cytoplasmic-facing; that stretch reads FNKTYRSAFA.

Belongs to the G-protein coupled receptor 1 family. As to quaternary structure, interacts (via C-terminus) with MPDZ and PATJ. May interact (via C-terminus) with MPP3, PRDX6, DLG4, DLG1, CASK, APBA1 and MAGI2. Interacts with GRM2 and DRD2; this may affect signaling. As to expression, detected in adult intestine, especially in mucosal epithelium, longitudinal and circular layers of muscularis externa and myenteric plexuses. Highly expressed in Paneth cells, and detected at lower levels in enterocytes (at protein level).

The protein localises to the cell membrane. Its subcellular location is the cell projection. It localises to the dendrite. It is found in the axon. The protein resides in the cytoplasmic vesicle. The protein localises to the membrane. Its subcellular location is the caveola. It localises to the presynapse. Its activity is regulated as follows. G-protein coupled receptor activity is regulated by lipids: oleamide increases HTR2A-mediated activity. In terms of biological role, G-protein coupled receptor for 5-hydroxytryptamine (serotonin). Also functions as a receptor for various drugs and psychoactive substances, including mescaline, psilocybin, 1-(2,5-dimethoxy-4-iodophenyl)-2-aminopropane (DOI) and lysergic acid diethylamide (LSD). Ligand binding causes a conformation change that triggers signaling via guanine nucleotide-binding proteins (G proteins) and modulates the activity of downstream effectors. HTR2A is coupled to G(q)/G(11) G alpha proteins and activates phospholipase C-beta, releasing diacylglycerol (DAG) and inositol 1,4,5-trisphosphate (IP3) second messengers that modulate the activity of phosphatidylinositol 3-kinase and promote the release of Ca(2+) ions from intracellular stores, respectively. Beta-arrestin family members inhibit signaling via G proteins and mediate activation of alternative signaling pathways. Affects neural activity, perception, cognition and mood. Plays a role in the regulation of behavior, including responses to anxiogenic situations and psychoactive substances. Plays a role in intestinal smooth muscle contraction, and may play a role in arterial vasoconstriction. In Cavia porcellus (Guinea pig), this protein is 5-hydroxytryptamine receptor 2A (HTR2A).